We begin with the raw amino-acid sequence, 392 residues long: Alanine--glyoxylate aminotransferase (392 aa).

Residue Thr9 is modified to Phosphothreonine. Lys209 is subject to N6-(pyridoxal phosphate)lysine. At Lys225 the chain carries N6-acetyllysine; alternate. Lys225 bears the N6-succinyllysine; alternate mark. Lys234 and Lys312 each carry N6-acetyllysine. Arg360 contacts substrate.

It belongs to the class-V pyridoxal-phosphate-dependent aminotransferase family. In terms of assembly, homodimer. The cofactor is pyridoxal 5'-phosphate. Liver.

It is found in the peroxisome. The catalysed reaction is L-serine + pyruvate = 3-hydroxypyruvate + L-alanine. The enzyme catalyses glyoxylate + L-alanine = glycine + pyruvate. Its activity is regulated as follows. Alanine--glyoxylate aminotransferase activity is inhibited by 1 mM (aminooxy)acetic acid by 97.5%. Peroxisomal aminotransferase that catalyzes the transamination of glyoxylate to glycine and contributes to the glyoxylate detoxification. Also catalyzes the transamination between L-serine and pyruvate and contributes to gluconeogenesis from the L-serine metabolism. This is Alanine--glyoxylate aminotransferase from Homo sapiens (Human).